The chain runs to 480 residues: Cytochrome P450 monooxygenase ORF11 (480 aa).

Residues 9-29 (LLLLPHLSALTPKTGFLIGLA) traverse the membrane as a helical segment. N-linked (GlcNAc...) asparagine glycans are attached at residues Asn-265 and Asn-352. A heme-binding site is contributed by Cys-449.

The protein belongs to the cytochrome P450 family. It depends on heme as a cofactor.

Its subcellular location is the membrane. It functions in the pathway sesquiterpene biosynthesis. Functionally, cytochrome P450 monooxygenase; part of the gene cluster that mediates the biosynthesis of PR-toxin, a bicyclic sesquiterpene belonging to the eremophilane class and acting as a mycotoxin. The first step of the pathway is catalyzed by the aristolochene synthase which performs the cyclization of trans,trans-farnesyl diphosphate (FPP) to the bicyclic sesquiterpene aristolochene. Following the formation of aristolochene, the non-oxygenated aristolochene is converted to the trioxygenated intermediate eremofortin B, via 7-epi-neopetasone. This conversion appears to involve three enzymes, a hydroxysterol oxidase-like enzyme, the quinone-oxidase prx3 that forms the quinone-type-structure in the bicyclic nucleus of aristolochene with the C8-oxo group and the C-3 hydroxyl group, and the P450 monooxygenase ORF6 that introduces the epoxide at the double bond between carbons 1 and 2. No monoxy or dioxy-intermediates have been reported to be released to the broth, so these three early oxidative reactions may be coupled together. Eremofortin B is further oxidized by another P450 monooxygenase, that introduces a second epoxide between carbons 7 and 11 prior to acetylation to eremofortin A by the acetyltransferase ORF8. The second epoxidation may be performed by a second P450 monooxygenase. After the acetylation step, eremofortin A is converted to eremofortin C and then to PR-toxin. First the conversion of eremofortin A to eremofortin C proceeds by oxidation of the side chain of the molecule at C-12 and is catalyzed by the short-chain oxidoreductase prx1. The cytochrome P450 monooxygenase ORF6 is probably also involved in this step. The primary alcohol formed at C-12 is finally oxidized by the short-chain alcohol dehydrogenase prx4 that forms PR-toxin. The chain is Cytochrome P450 monooxygenase ORF11 from Penicillium roqueforti (strain FM164).